Reading from the N-terminus, the 597-residue chain is Arginine--tRNA ligase (597 aa).

The 'HIGH' region motif lies at 138–148 (ANPTGPMHVGH).

Belongs to the class-I aminoacyl-tRNA synthetase family. As to quaternary structure, monomer.

Its subcellular location is the cytoplasm. The catalysed reaction is tRNA(Arg) + L-arginine + ATP = L-arginyl-tRNA(Arg) + AMP + diphosphate. This chain is Arginine--tRNA ligase, found in Rhodopseudomonas palustris (strain HaA2).